We begin with the raw amino-acid sequence, 851 residues long: mRNA-capping enzyme catalytic subunit (851 aa).

Residues 1–544 (MDKYISKTPL…EEEKLADIAA (544 aa)) form a triphosphatase-guanylyltransferase region. Positions 38, 40, 199, and 201 each coordinate Mg(2+). The N6-GMP-lysine intermediate role is filled by lysine 266. 554-555 (LN) contributes to the S-adenosyl-L-methionine binding site. Residues 565–850 (RVRGALGILS…HYMVYVFSKE (286 aa)) form the mRNA cap 0 methyltransferase domain. 574-575 (SN) contacts mRNA. Residues lysine 578, aspartate 603, aspartate 625, and 683–685 (QFA) each bind S-adenosyl-L-methionine.

This sequence in the N-terminal section; belongs to the dsDNA virus mRNA guanylyltransferase family. It in the C-terminal section; belongs to the class I-like SAM-binding methyltransferase superfamily. mRNA cap 0 methyltransferase family. Heterodimer of a catalytic and a regulatory subunit. Intrinsic methyltransferase activity of the catalytic subunit is weak and needs to be stimulated 30- to 50-fold by the regulatory subunit, which is itself catalytically inert. It depends on Mg(2+) as a cofactor.

It is found in the virion. The enzyme catalyses a 5'-end triphospho-ribonucleoside in mRNA + H2O = a 5'-end diphospho-ribonucleoside in mRNA + phosphate + H(+). It carries out the reaction a 5'-end diphospho-ribonucleoside in mRNA + GTP + H(+) = a 5'-end (5'-triphosphoguanosine)-ribonucleoside in mRNA + diphosphate. It catalyses the reaction a 5'-end (5'-triphosphoguanosine)-ribonucleoside in mRNA + S-adenosyl-L-methionine = a 5'-end (N(7)-methyl 5'-triphosphoguanosine)-ribonucleoside in mRNA + S-adenosyl-L-homocysteine. In terms of biological role, catalytic subunit of the mRNA capping enzyme which catalyzes three enzymatic reactions: the 5' triphosphate end of the pre-mRNA is hydrolyzed to a diphosphate by RNA 5' triphosphatase; the diphosphate RNA end is capped with GMP by RNA guanylyltransferase and the GpppN cap is methylated by RNA (guanine-N7) methyltransferase. Heterodimeric mRNA capping enzyme catalyzes the linkage of a N7-methyl-guanosine moiety to the first transcribed nucleotide (cap 0 structure), whereas the polymerase associated VP39 is responsible for a second methylation at the 2'-O position of the ribose (cap 1 structure). The heterodimeric enzyme is also involved in early viral gene transcription termination and intermediate viral gene transcription initiation. Early gene transcription termination requires the termination factor VTF, the DNA-dependent ATPase NPH-I and the Rap94 subunit of the viral RNA polymerase, as well as the presence of a specific termination motif. Binds, together with RAP94, to the termination motif 5'-UUUUUNU-3' in the nascent early mRNA. The chain is mRNA-capping enzyme catalytic subunit from Fowlpox virus (strain NVSL) (FPV).